The sequence spans 127 residues: Small ribosomal subunit protein eS8 (127 aa).

The protein belongs to the eukaryotic ribosomal protein eS8 family. In terms of assembly, part of the 30S ribosomal subunit.

This chain is Small ribosomal subunit protein eS8, found in Pyrococcus furiosus (strain ATCC 43587 / DSM 3638 / JCM 8422 / Vc1).